Reading from the N-terminus, the 485-residue chain is NADH-quinone oxidoreductase subunit N (485 aa).

A run of 14 helical transmembrane segments spans residues 8-28 (LIAL…MLSI), 35-55 (FVNA…LYFV), 75-95 (FYTG…YPWL), 105-125 (FYLL…ASHL), 127-147 (SLFI…GYAF), 159-179 (YTIL…LVYA), 203-223 (LLAG…LVPF), 235-255 (PAPV…GVLM), 271-291 (TVLG…AISQ), 297-317 (LLGY…IAVQ), 326-346 (VGVY…VVSL), 373-393 (AAVM…LGFI), 408-427 (WWLT…YYLR), and 449-469 (AFTA…VLGI).

This sequence belongs to the complex I subunit 2 family. As to quaternary structure, NDH-1 is composed of 13 different subunits. Subunits NuoA, H, J, K, L, M, N constitute the membrane sector of the complex.

The protein localises to the cell inner membrane. It catalyses the reaction a quinone + NADH + 5 H(+)(in) = a quinol + NAD(+) + 4 H(+)(out). NDH-1 shuttles electrons from NADH, via FMN and iron-sulfur (Fe-S) centers, to quinones in the respiratory chain. The immediate electron acceptor for the enzyme in this species is believed to be ubiquinone. Couples the redox reaction to proton translocation (for every two electrons transferred, four hydrogen ions are translocated across the cytoplasmic membrane), and thus conserves the redox energy in a proton gradient. The sequence is that of NADH-quinone oxidoreductase subunit N from Erwinia tasmaniensis (strain DSM 17950 / CFBP 7177 / CIP 109463 / NCPPB 4357 / Et1/99).